We begin with the raw amino-acid sequence, 114 residues long: Tyrosine-protein phosphatase 27 (114 aa).

Positions 1–114 (WQMIVEHKCC…ELGNDNPIVV (114 aa)) constitute a Tyrosine-protein phosphatase domain. A substrate-binding site is contributed by aspartate 82.

It belongs to the protein-tyrosine phosphatase family.

The enzyme catalyses O-phospho-L-tyrosyl-[protein] + H2O = L-tyrosyl-[protein] + phosphate. In Styela plicata (Wrinkled sea squirt), this protein is Tyrosine-protein phosphatase 27 (STY-27).